The primary structure comprises 203 residues: MKSRNGPLRVGIGGPVGSGKTALTEKLCKAMRDDYSVAVVTNDIYTTEDAEALVRMQALPSDRIVGVETGGCPHTAIREDATINLQAIAGLNERFPDLDVVFIESGGDNLAATFSPDLADITIYVISVCQGEEIPRKGGPGITRSDLLVINKKDLAPHVGADLEVMDRDATRMRASRPFVFSDMKRGDGINSIVSFLREQGGL.

14-21 contributes to the GTP binding site; it reads GPVGSGKT.

Belongs to the SIMIBI class G3E GTPase family. UreG subfamily. As to quaternary structure, homodimer. UreD, UreF and UreG form a complex that acts as a GTP-hydrolysis-dependent molecular chaperone, activating the urease apoprotein by helping to assemble the nickel containing metallocenter of UreC. The UreE protein probably delivers the nickel.

The protein resides in the cytoplasm. In terms of biological role, facilitates the functional incorporation of the urease nickel metallocenter. This process requires GTP hydrolysis, probably effectuated by UreG. The sequence is that of Urease accessory protein UreG from Rhizobium etli (strain CIAT 652).